We begin with the raw amino-acid sequence, 395 residues long: Glyceraldehyde-3-phosphate dehydrogenase, testis-specific (395 aa).

Residues 1-60 (MSKRDIVLTNVTVVQLLRQPCPEPRVEAEPEPPAQPQPQPEPIKEEVPPPPPPPPAPKKV) form a testis-specific N-terminal extension region. The tract at residues 19–59 (QPCPEPRVEAEPEPPAQPQPQPEPIKEEVPPPPPPPPAPKK) is disordered. Composition is skewed to pro residues over residues 31–41 (EPPAQPQPQPE) and 48–57 (PPPPPPPPAP). NAD(+) is bound by residues 72–73 (RI), D93, and K138. Residues 210-212 (SCT), T241, 270-271 (TG), and R293 contribute to the D-glyceraldehyde 3-phosphate site. Residue C211 is the Nucleophile of the active site. N375 serves as a coordination point for NAD(+).

This sequence belongs to the glyceraldehyde-3-phosphate dehydrogenase family. As to quaternary structure, homotetramer.

The protein localises to the cytoplasm. The enzyme catalyses D-glyceraldehyde 3-phosphate + phosphate + NAD(+) = (2R)-3-phospho-glyceroyl phosphate + NADH + H(+). It participates in carbohydrate degradation; glycolysis; pyruvate from D-glyceraldehyde 3-phosphate: step 1/5. Its function is as follows. May play an important role in regulating the switch between different pathways for energy production during spermiogenesis and in the spermatozoon. Required for sperm motility and male fertility. The polypeptide is Glyceraldehyde-3-phosphate dehydrogenase, testis-specific (GAPDHS) (Bos taurus (Bovine)).